A 496-amino-acid polypeptide reads, in one-letter code: Probable zinc metalloprotease SNOG_06590 (496 aa).

An N-terminal signal peptide occupies residues 1–20 (MRSSMFFAVCAAAALQTALS). N-linked (GlcNAc...) asparagine glycosylation occurs at asparagine 138. Histidine 161, aspartate 181, and glutamate 226 together coordinate Zn(2+). N-linked (GlcNAc...) asparagine glycosylation is present at asparagine 241. Position 253 (aspartate 253) interacts with Zn(2+). N-linked (GlcNAc...) asparagine glycans are attached at residues asparagine 282, asparagine 361, asparagine 409, asparagine 415, and asparagine 457. In terms of domain architecture, Fibronectin type-III spans 402-496 (EPMNVGINTT…PFPFGCTRNC (95 aa)).

This sequence belongs to the peptidase M28 family. M28B subfamily. Requires Zn(2+) as cofactor.

It localises to the secreted. This Phaeosphaeria nodorum (strain SN15 / ATCC MYA-4574 / FGSC 10173) (Glume blotch fungus) protein is Probable zinc metalloprotease SNOG_06590.